The primary structure comprises 208 residues: Protein-L-isoaspartate O-methyltransferase (208 aa).

Ser-59 is an active-site residue.

It belongs to the methyltransferase superfamily. L-isoaspartyl/D-aspartyl protein methyltransferase family.

Its subcellular location is the cytoplasm. The catalysed reaction is [protein]-L-isoaspartate + S-adenosyl-L-methionine = [protein]-L-isoaspartate alpha-methyl ester + S-adenosyl-L-homocysteine. Functionally, catalyzes the methyl esterification of L-isoaspartyl residues in peptides and proteins that result from spontaneous decomposition of normal L-aspartyl and L-asparaginyl residues. It plays a role in the repair and/or degradation of damaged proteins. The protein is Protein-L-isoaspartate O-methyltransferase of Vibrio atlanticus (strain LGP32) (Vibrio splendidus (strain Mel32)).